The primary structure comprises 357 residues: Protein MGF 360-14L (357 aa).

The protein belongs to the asfivirus MGF 360 family. In terms of assembly, interacts with host IRF3 and TRIM21; these interactions mediates degradation of IRF3 through TRIM21 and ubiquitin-meditated proteolysis.

It is found in the host cytoplasm. Plays a role in virus cell tropism, and may be required for efficient virus replication in macrophages. Also inhibits the host cGAS/STING-mediated type I interferon production by inducing host IRF3 degradation through the proteasome pathway. The chain is Protein MGF 360-14L from Ornithodoros (relapsing fever ticks).